Here is a 564-residue protein sequence, read N- to C-terminus: Dihydroxy-acid dehydratase (564 aa).

D80 lines the Mg(2+) pocket. C121 is a binding site for [2Fe-2S] cluster. Residues D122 and K123 each contribute to the Mg(2+) site. An N6-carboxylysine modification is found at K123. Residue C194 participates in [2Fe-2S] cluster binding. E447 serves as a coordination point for Mg(2+). S473 serves as the catalytic Proton acceptor.

It belongs to the IlvD/Edd family. As to quaternary structure, homodimer. It depends on [2Fe-2S] cluster as a cofactor. Mg(2+) is required as a cofactor.

The catalysed reaction is (2R)-2,3-dihydroxy-3-methylbutanoate = 3-methyl-2-oxobutanoate + H2O. The enzyme catalyses (2R,3R)-2,3-dihydroxy-3-methylpentanoate = (S)-3-methyl-2-oxopentanoate + H2O. It participates in amino-acid biosynthesis; L-isoleucine biosynthesis; L-isoleucine from 2-oxobutanoate: step 3/4. Its pathway is amino-acid biosynthesis; L-valine biosynthesis; L-valine from pyruvate: step 3/4. Its function is as follows. Functions in the biosynthesis of branched-chain amino acids. Catalyzes the dehydration of (2R,3R)-2,3-dihydroxy-3-methylpentanoate (2,3-dihydroxy-3-methylvalerate) into 2-oxo-3-methylpentanoate (2-oxo-3-methylvalerate) and of (2R)-2,3-dihydroxy-3-methylbutanoate (2,3-dihydroxyisovalerate) into 2-oxo-3-methylbutanoate (2-oxoisovalerate), the penultimate precursor to L-isoleucine and L-valine, respectively. In Listeria monocytogenes serotype 4b (strain CLIP80459), this protein is Dihydroxy-acid dehydratase.